A 147-amino-acid polypeptide reads, in one-letter code: Endothelial differentiation-related factor 1 homolog (147 aa).

The interval 1 to 69 is disordered; the sequence is MAESDWDTVT…KLDRETEELH (69 aa). Positions 33-42 are enriched in basic and acidic residues; sequence RRGEEVETSK. The segment covering 46–58 has biased composition (polar residues); that stretch reads AGQNKQHTITRNT. Over residues 59-69 the composition is skewed to basic and acidic residues; sequence AKLDRETEELH. In terms of domain architecture, HTH cro/C1-type spans 81–135; the sequence is IQQGRQGKGMTQKDLATKINEKPQVIADYECGKAIPNNQVMGKIERVIGLKLRGK. Positions 92–111 form a DNA-binding region, H-T-H motif; the sequence is QKDLATKINEKPQVIADYEC.

The protein resides in the nucleus. Probable transcriptional coactivator. The sequence is that of Endothelial differentiation-related factor 1 homolog (edf1) from Xenopus laevis (African clawed frog).